We begin with the raw amino-acid sequence, 368 residues long: Type 2 DNA topoisomerase 6 subunit A (368 aa).

Residues 9–148 (PDTEEAREQL…FHMRPEESGA (140 aa)) enclose the Topo IIA-type catalytic domain. Tyr-103 (O-(5'-phospho-DNA)-tyrosine intermediate) is an active-site residue. Mg(2+) is bound by residues Glu-201 and Asp-253.

Belongs to the TOP6A family. In terms of assembly, homodimer. Heterotetramer of two Top6A and two Top6B chains. Requires Mg(2+) as cofactor.

The enzyme catalyses ATP-dependent breakage, passage and rejoining of double-stranded DNA.. Functionally, relaxes both positive and negative superturns and exhibits a strong decatenase activity. This is Type 2 DNA topoisomerase 6 subunit A from Haloarcula marismortui (strain ATCC 43049 / DSM 3752 / JCM 8966 / VKM B-1809) (Halobacterium marismortui).